The chain runs to 191 residues: GDP-mannose pyrophosphatase (191 aa).

Residues Tyr-17, 38-40, Arg-67, and 85-87 contribute to the GDP-alpha-D-mannose site; these read KRE and AGL. The Nudix hydrolase domain maps to 43–180; that stretch reads DRGNGATILL…EIRDGKTVLL (138 aa). Residues Ala-85, Glu-100, and Glu-104 each coordinate Mg(2+). The short motif at 86 to 106 is the Nudix box element; it reads GLLDNDEPEVCIRKEAIEETG. GDP-alpha-D-mannose contacts are provided by residues Glu-104, Glu-127, 150–151, and Lys-176; that span reads DE. Position 151 (Glu-151) interacts with Mg(2+).

Belongs to the Nudix hydrolase family. NudK subfamily. As to quaternary structure, homodimer. Requires Mg(2+) as cofactor.

It catalyses the reaction GDP-alpha-D-mannose + H2O = alpha-D-mannose 1-phosphate + GMP + 2 H(+). In terms of biological role, nucleoside diphosphate sugar hydrolase that hydrolyzes GDP-mannose as its preferred substrate, yielding GMP and mannose-1-phosphate. This Escherichia coli (strain UTI89 / UPEC) protein is GDP-mannose pyrophosphatase (nudK).